The primary structure comprises 271 residues: 3-methyl-2-oxobutanoate hydroxymethyltransferase (271 aa).

Residues D51 and D90 each contribute to the Mg(2+) site. Residues D51–S52, D90, and K118 contribute to the 3-methyl-2-oxobutanoate site. E120 serves as a coordination point for Mg(2+). E186 acts as the Proton acceptor in catalysis.

It belongs to the PanB family. In terms of assembly, homodecamer; pentamer of dimers. Mg(2+) serves as cofactor.

Its subcellular location is the cytoplasm. It carries out the reaction 3-methyl-2-oxobutanoate + (6R)-5,10-methylene-5,6,7,8-tetrahydrofolate + H2O = 2-dehydropantoate + (6S)-5,6,7,8-tetrahydrofolate. It functions in the pathway cofactor biosynthesis; (R)-pantothenate biosynthesis; (R)-pantoate from 3-methyl-2-oxobutanoate: step 1/2. Functionally, catalyzes the reversible reaction in which hydroxymethyl group from 5,10-methylenetetrahydrofolate is transferred onto alpha-ketoisovalerate to form ketopantoate. This is 3-methyl-2-oxobutanoate hydroxymethyltransferase from Xanthomonas oryzae pv. oryzae (strain MAFF 311018).